Reading from the N-terminus, the 224-residue chain is Casparian strip membrane protein 1 (224 aa).

The interval 1 to 22 is disordered; the sequence is MSSGEPAAVSIPIHDHHGKAPA. The Cytoplasmic segment spans residues 1–62; the sequence is MSSGEPAAVS…RGDHHRGSRC (62 aa). A helical transmembrane segment spans residues 63-83; it reads LAFLDFILRIAAFGPALAAAI. At 84–110 the chain is on the extracellular side; that stretch reads STGTSDETLSVFTEFYQFRARFDDFPA. The helical transmembrane segment at 111 to 131 threads the bilayer; the sequence is FLFFLVANAIVAGYLVLSLPF. Residues 132 to 145 lie on the Cytoplasmic side of the membrane; it reads SAVLVIRPQTIGLR. A helical transmembrane segment spans residues 146-166; sequence LLLLVCDMIMAAMLTAAASAA. Residues 167-200 lie on the Extracellular side of the membrane; that stretch reads AAIVDLAHNGNLRANWVAICMQFHGFCQRTSGSV. Residues 201–221 traverse the membrane as a helical segment; the sequence is VASFLTVVILMFLVILAACSI. At 222 to 224 the chain is on the cytoplasmic side; that stretch reads RKR.

Belongs to the Casparian strip membrane proteins (CASP) family. As to quaternary structure, homodimer and heterodimers.

The protein resides in the cell membrane. In terms of biological role, regulates membrane-cell wall junctions and localized cell wall deposition. Required for establishment of the Casparian strip membrane domain (CSD) and the subsequent formation of Casparian strips, a cell wall modification of the root endodermis that determines an apoplastic barrier between the intraorganismal apoplasm and the extraorganismal apoplasm and prevents lateral diffusion. In Oryza sativa subsp. indica (Rice), this protein is Casparian strip membrane protein 1.